Here is a 138-residue protein sequence, read N- to C-terminus: Phosphoribosyl-AMP cyclohydrolase (138 aa).

Asp84 is a Mg(2+) binding site. Residue Cys85 participates in Zn(2+) binding. Mg(2+) contacts are provided by Asp86 and Asp88. Cys102 and Cys109 together coordinate Zn(2+).

Belongs to the PRA-CH family. In terms of assembly, homodimer. Requires Mg(2+) as cofactor. Zn(2+) is required as a cofactor.

It is found in the cytoplasm. It carries out the reaction 1-(5-phospho-beta-D-ribosyl)-5'-AMP + H2O = 1-(5-phospho-beta-D-ribosyl)-5-[(5-phospho-beta-D-ribosylamino)methylideneamino]imidazole-4-carboxamide. Its pathway is amino-acid biosynthesis; L-histidine biosynthesis; L-histidine from 5-phospho-alpha-D-ribose 1-diphosphate: step 3/9. In terms of biological role, catalyzes the hydrolysis of the adenine ring of phosphoribosyl-AMP. This is Phosphoribosyl-AMP cyclohydrolase from Burkholderia lata (strain ATCC 17760 / DSM 23089 / LMG 22485 / NCIMB 9086 / R18194 / 383).